A 93-amino-acid polypeptide reads, in one-letter code: Small ribosomal subunit protein bS20 (93 aa).

It belongs to the bacterial ribosomal protein bS20 family.

In terms of biological role, binds directly to 16S ribosomal RNA. The polypeptide is Small ribosomal subunit protein bS20 (Hydrogenobaculum sp. (strain Y04AAS1)).